The following is a 146-amino-acid chain: Transcriptional regulator AdcR (146 aa).

Residues 1-143 enclose the HTH marR-type domain; that stretch reads MRQLAKDINA…IQRFLTALVG (143 aa). 4 residues coordinate Zn(2+): E24, C30, E41, and H42. A DNA-binding region (H-T-H motif) is located at residues 54–77; sequence NSELARRLNVSQAAVTKAIKSLVK. Residues E107, H108, and H112 each contribute to the Zn(2+) site.

In terms of assembly, homodimer.

Zinc acts as a coregulator and is required for DNA-binding activity. In terms of biological role, zinc-responsive regulator that acts both as a repressor and as an activator by regulating directly the promoters of its target genes. In the presence of zinc, directly represses the expression of the adcRCBA operon, of genes coding for a group of surface antigen zinc-binding pneumococcal histidine triad proteins (PhtA, PhtB, PhtD and PhtE), and of adcAII. Can also activate expression of adh. This chain is Transcriptional regulator AdcR (adcR), found in Streptococcus pneumoniae serotype 2 (strain D39 / NCTC 7466).